The chain runs to 148 residues: Putative nickel-responsive regulator (148 aa).

Histidine 88, histidine 99, histidine 101, and cysteine 107 together coordinate Ni(2+).

The protein belongs to the transcriptional regulatory CopG/NikR family. Homotetramer. Ni(2+) serves as cofactor.

Functionally, transcriptional regulator. The polypeptide is Putative nickel-responsive regulator (Helicobacter pylori (strain J99 / ATCC 700824) (Campylobacter pylori J99)).